Consider the following 187-residue polypeptide: MESFIASIRLVAATMLICVAGYSAAVWAVGQVLMPGSAQGSLIAAADGKVIGSSQVAQNFTEPRYFWPRPSAVDYNGAGAGGSNKSPTSTDIADRARETVARYGATAENPLPAELAAASGAGLDPHISERGALYQAARVAQARGLPQAGVEALIHEHAFAPGAFLAPDRLVNVLELNLALDRVETAG.

A helical transmembrane segment spans residues 10 to 30; it reads LVAATMLICVAGYSAAVWAVG.

This sequence belongs to the KdpC family. In terms of assembly, the system is composed of three essential subunits: KdpA, KdpB and KdpC.

It is found in the cell inner membrane. Its function is as follows. Part of the high-affinity ATP-driven potassium transport (or Kdp) system, which catalyzes the hydrolysis of ATP coupled with the electrogenic transport of potassium into the cytoplasm. This subunit acts as a catalytic chaperone that increases the ATP-binding affinity of the ATP-hydrolyzing subunit KdpB by the formation of a transient KdpB/KdpC/ATP ternary complex. The protein is Potassium-transporting ATPase KdpC subunit of Parvibaculum lavamentivorans (strain DS-1 / DSM 13023 / NCIMB 13966).